Reading from the N-terminus, the 183-residue chain is Large ribosomal subunit protein uL6 (183 aa).

This sequence belongs to the universal ribosomal protein uL6 family. In terms of assembly, part of the 50S ribosomal subunit.

This protein binds to the 23S rRNA, and is important in its secondary structure. It is located near the subunit interface in the base of the L7/L12 stalk, and near the tRNA binding site of the peptidyltransferase center. The chain is Large ribosomal subunit protein uL6 from Mycoplasmoides gallisepticum (strain R(low / passage 15 / clone 2)) (Mycoplasma gallisepticum).